The primary structure comprises 38 residues: Large ribosomal subunit protein bL36 (38 aa).

It belongs to the bacterial ribosomal protein bL36 family.

This chain is Large ribosomal subunit protein bL36, found in Lactobacillus johnsonii (strain CNCM I-12250 / La1 / NCC 533).